Consider the following 302-residue polypeptide: N-acetyl-D-glucosamine kinase (302 aa).

Residues 4–11 (GFDVGGTK) and 133–140 (GFGGGLVY) each bind ATP. His157, Cys177, Cys179, and Cys184 together coordinate Zn(2+).

This sequence belongs to the ROK (NagC/XylR) family. NagK subfamily.

The enzyme catalyses N-acetyl-D-glucosamine + ATP = N-acetyl-D-glucosamine 6-phosphate + ADP + H(+). It participates in cell wall biogenesis; peptidoglycan recycling. Functionally, catalyzes the phosphorylation of N-acetyl-D-glucosamine (GlcNAc) derived from cell-wall degradation, yielding GlcNAc-6-P. This is N-acetyl-D-glucosamine kinase from Vibrio atlanticus (strain LGP32) (Vibrio splendidus (strain Mel32)).